A 172-amino-acid chain; its full sequence is Methylated-DNA--protein-cysteine methyltransferase (172 aa).

Residue Cys142 is the Nucleophile; methyl group acceptor of the active site.

The protein belongs to the MGMT family.

The protein localises to the cytoplasm. It carries out the reaction a 6-O-methyl-2'-deoxyguanosine in DNA + L-cysteinyl-[protein] = S-methyl-L-cysteinyl-[protein] + a 2'-deoxyguanosine in DNA. The catalysed reaction is a 4-O-methyl-thymidine in DNA + L-cysteinyl-[protein] = a thymidine in DNA + S-methyl-L-cysteinyl-[protein]. Its function is as follows. Involved in the cellular defense against the biological effects of O6-methylguanine (O6-MeG) and O4-methylthymine (O4-MeT) in DNA. Repairs the methylated nucleobase in DNA by stoichiometrically transferring the methyl group to a cysteine residue in the enzyme. This is a suicide reaction: the enzyme is irreversibly inactivated. In Pyrococcus abyssi (strain GE5 / Orsay), this protein is Methylated-DNA--protein-cysteine methyltransferase.